A 411-amino-acid chain; its full sequence is MSAVSESVLSLSRYYLPVYRPCQVVLVRGQGSRVWDEQGRDYLDLAAGIAVCCLGHCDPDLVAALVEQAGRLWHTSNVFYSEPSLRLAQELVDVSRFAERVFLCSSGTEANEAAIKLVRKWAAAQGRLPEHRTIVTFRGSFHGRTLGAVTATAQPKYQEGYEPLPGGFRYVDFNHIEALEAAMVGGDVAAVMLEPIQGEGGVMPIAPGYLAQVRALCDRYGALLVLDEIQCGMGRTGTLFAYWQEEVVPDIVTLAKGLGGGFPIGAMLAGPKVAEVMQFGAHGTTFGGNPMAAAVARVALRKLASVEIAANVQRQSVALRAGLEEISEAFGGVFTQVRGRGLMLGAVLAPLYAGQASAILEVAAEHGVLLLQAGPDVLRFVPALNVSDEELADGLVRLRAALGDYVSRCRG.

Residues G107–T108 and F141 each bind pyridoxal 5'-phosphate. Residue R144 coordinates N(2)-acetyl-L-ornithine. Residue D227 to Q230 coordinates pyridoxal 5'-phosphate. The residue at position 256 (K256) is an N6-(pyridoxal phosphate)lysine. T284 contacts N(2)-acetyl-L-ornithine. T285 is a pyridoxal 5'-phosphate binding site.

The protein belongs to the class-III pyridoxal-phosphate-dependent aminotransferase family. ArgD subfamily. Homodimer. Pyridoxal 5'-phosphate serves as cofactor.

The protein resides in the cytoplasm. It carries out the reaction N(2)-acetyl-L-ornithine + 2-oxoglutarate = N-acetyl-L-glutamate 5-semialdehyde + L-glutamate. Its pathway is amino-acid biosynthesis; L-arginine biosynthesis; N(2)-acetyl-L-ornithine from L-glutamate: step 4/4. This Xylella fastidiosa (strain Temecula1 / ATCC 700964) protein is Acetylornithine aminotransferase.